The primary structure comprises 51 residues: Large ribosomal subunit protein eL39 (51 aa).

This sequence belongs to the eukaryotic ribosomal protein eL39 family.

This is Large ribosomal subunit protein eL39 from Saccharolobus islandicus (strain L.S.2.15 / Lassen #1) (Sulfolobus islandicus).